A 348-amino-acid chain; its full sequence is Flagellar P-ring protein (348 aa).

An N-terminal signal peptide occupies residues 1–16 (MRVLTIFLLFMTSIFA).

This sequence belongs to the FlgI family. As to quaternary structure, the basal body constitutes a major portion of the flagellar organelle and consists of four rings (L,P,S, and M) mounted on a central rod.

It localises to the periplasm. It is found in the bacterial flagellum basal body. In terms of biological role, assembles around the rod to form the L-ring and probably protects the motor/basal body from shearing forces during rotation. This Campylobacter jejuni subsp. jejuni serotype O:6 (strain 81116 / NCTC 11828) protein is Flagellar P-ring protein.